The chain runs to 372 residues: NAD(P)H-quinone oxidoreductase subunit 1, chloroplastic (372 aa).

The next 8 helical transmembrane spans lie at 28-48, 65-85, 97-117, 128-148, 166-186, 254-274, 312-332, and 352-372; these read IWIC…VLVI, PEYA…KLIL, WLFT…YLVV, IGIG…GLLI, AAQA…IILM, FGLF…FVSV, GIIG…LAVL, and FLLP…ITLL.

Belongs to the complex I subunit 1 family. NDH is composed of at least 16 different subunits, 5 of which are encoded in the nucleus.

It is found in the plastid. The protein localises to the chloroplast thylakoid membrane. It catalyses the reaction a plastoquinone + NADH + (n+1) H(+)(in) = a plastoquinol + NAD(+) + n H(+)(out). It carries out the reaction a plastoquinone + NADPH + (n+1) H(+)(in) = a plastoquinol + NADP(+) + n H(+)(out). NDH shuttles electrons from NAD(P)H:plastoquinone, via FMN and iron-sulfur (Fe-S) centers, to quinones in the photosynthetic chain and possibly in a chloroplast respiratory chain. The immediate electron acceptor for the enzyme in this species is believed to be plastoquinone. Couples the redox reaction to proton translocation, and thus conserves the redox energy in a proton gradient. This Staurastrum punctulatum (Green alga) protein is NAD(P)H-quinone oxidoreductase subunit 1, chloroplastic.